Here is a 56-residue protein sequence, read N- to C-terminus: Large ribosomal subunit protein uL30 (56 aa).

The protein belongs to the universal ribosomal protein uL30 family. In terms of assembly, part of the 50S ribosomal subunit.

The polypeptide is Large ribosomal subunit protein uL30 (Oleidesulfovibrio alaskensis (strain ATCC BAA-1058 / DSM 17464 / G20) (Desulfovibrio alaskensis)).